The primary structure comprises 20 residues: GRNGKSQSIIVGPWGDRVTN.

The tract at residues 1-20 (GRNGKSQSIIVGPWGDRVTN) is disordered.

This sequence belongs to the jacalin lectin family. Formed of four alpha chains and four beta chains.

Its function is as follows. D-galactose-specific lectin, binds the T-antigen structure Gal-beta1,3-GalNAc. This chain is Agglutinin beta-2 chain, found in Maclura pomifera (Osage orange).